We begin with the raw amino-acid sequence, 255 residues long: Small ribosomal subunit protein uS2 (255 aa).

Residues 232-255 (ASGRDLGASEEVPVEPALEEASEA) are disordered.

The protein belongs to the universal ribosomal protein uS2 family.

This is Small ribosomal subunit protein uS2 from Rhizobium meliloti (strain 1021) (Ensifer meliloti).